A 213-amino-acid polypeptide reads, in one-letter code: Chloramphenicol acetyltransferase 2 (213 aa).

Histidine 189 functions as the Proton acceptor in the catalytic mechanism.

It belongs to the chloramphenicol acetyltransferase family. As to quaternary structure, homotrimer.

The catalysed reaction is chloramphenicol + acetyl-CoA = chloramphenicol 3-acetate + CoA. In terms of biological role, this enzyme is an effector of chloramphenicol resistance in bacteria. The chain is Chloramphenicol acetyltransferase 2 (cat-IIH) from Haemophilus influenzae.